The following is a 372-amino-acid chain: 4-hydroxy-3-methylbut-2-en-1-yl diphosphate synthase (flavodoxin) (372 aa).

[4Fe-4S] cluster is bound by residues Cys-270, Cys-273, Cys-305, and Glu-312.

It belongs to the IspG family. The cofactor is [4Fe-4S] cluster.

The catalysed reaction is (2E)-4-hydroxy-3-methylbut-2-enyl diphosphate + oxidized [flavodoxin] + H2O + 2 H(+) = 2-C-methyl-D-erythritol 2,4-cyclic diphosphate + reduced [flavodoxin]. The protein operates within isoprenoid biosynthesis; isopentenyl diphosphate biosynthesis via DXP pathway; isopentenyl diphosphate from 1-deoxy-D-xylulose 5-phosphate: step 5/6. Its function is as follows. Converts 2C-methyl-D-erythritol 2,4-cyclodiphosphate (ME-2,4cPP) into 1-hydroxy-2-methyl-2-(E)-butenyl 4-diphosphate. This is 4-hydroxy-3-methylbut-2-en-1-yl diphosphate synthase (flavodoxin) from Salmonella paratyphi B (strain ATCC BAA-1250 / SPB7).